We begin with the raw amino-acid sequence, 505 residues long: Beta-glucosidase 3 (505 aa).

A signal peptide spans 1 to 22 (MAAAAAFFCALLFISVQHGVLG). The a beta-D-glucoside site is built by Q43 and H143. Catalysis depends on E189, which acts as the Proton donor. C208 and C217 are disulfide-bonded. N-linked (GlcNAc...) asparagine glycosylation is present at N221. Residues Y333 and E405 each coordinate a beta-D-glucoside. E405 functions as the Nucleophile in the catalytic mechanism. N-linked (GlcNAc...) asparagine glycans are attached at residues N415 and N436. 2 residues coordinate a beta-D-glucoside: W450 and Y466.

It belongs to the glycosyl hydrolase 1 family.

It catalyses the reaction Hydrolysis of terminal, non-reducing beta-D-glucosyl residues with release of beta-D-glucose.. In Oryza sativa subsp. japonica (Rice), this protein is Beta-glucosidase 3 (BGLU3).